The primary structure comprises 276 residues: 3-methyl-2-oxobutanoate hydroxymethyltransferase (276 aa).

Residues Asp-46 and Asp-85 each contribute to the Mg(2+) site. Residues Asp-46–Ser-47, Asp-85, and Lys-115 contribute to the 3-methyl-2-oxobutanoate site. Glu-117 is a Mg(2+) binding site. Glu-184 acts as the Proton acceptor in catalysis.

It belongs to the PanB family. Homodecamer; pentamer of dimers. Mg(2+) serves as cofactor.

It is found in the cytoplasm. The enzyme catalyses 3-methyl-2-oxobutanoate + (6R)-5,10-methylene-5,6,7,8-tetrahydrofolate + H2O = 2-dehydropantoate + (6S)-5,6,7,8-tetrahydrofolate. It functions in the pathway cofactor biosynthesis; (R)-pantothenate biosynthesis; (R)-pantoate from 3-methyl-2-oxobutanoate: step 1/2. Catalyzes the reversible reaction in which hydroxymethyl group from 5,10-methylenetetrahydrofolate is transferred onto alpha-ketoisovalerate to form ketopantoate. The chain is 3-methyl-2-oxobutanoate hydroxymethyltransferase from Heliobacterium modesticaldum (strain ATCC 51547 / Ice1).